We begin with the raw amino-acid sequence, 196 residues long: MEKVVLLLSVLSLGVVCPQPMTDSQRFSIAVSRIHYLHQVAQRSFFTFESSLSAEDQRQLNKIFLQDSCNSDYIRSPIDKHETQRSSVMKLLSISYRLVESWEYPSRALIGGSTNQISNKLSELKLGIRLLMEANQDGAEIFPESSAFQLDYQSLGTDDPRQMYELLACFKKDMHKVETYLTVAKCRLSPEANCTL.

An N-terminal signal peptide occupies residues 1-18; sequence MEKVVLLLSVLSLGVVCP. The residue at position 19 (Q19) is a Pyrrolidone carboxylic acid. H35 provides a ligand contact to Zn(2+). C69 and C169 are joined by a disulfide. E178 is a binding site for Zn(2+). Cysteines 186 and 194 form a disulfide.

It belongs to the somatotropin/prolactin family.

The protein localises to the secreted. Functionally, growth hormone plays an important role in growth control and is involved in the regulation of several anabolic processes. Implicated as an osmoregulatory substance important for seawater adaptation. This Siganus guttatus (Orange-spotted spinefoot) protein is Somatotropin (gh).